The sequence spans 463 residues: Retinoic acid receptor RXR-gamma (463 aa).

The interval M1 to I138 is modulating. A disordered region spans residues G16–P53. 2 NR C4-type zinc fingers span residues C139 to C159 and C175 to C199. A DNA-binding region (nuclear receptor) is located at residues C139–M204. Residues K205–G230 are hinge. Positions H231–P459 constitute an NR LBD domain.

This sequence belongs to the nuclear hormone receptor family. NR2 subfamily. As to quaternary structure, homodimer. Heterodimer with a RAR molecule. Binds DNA preferentially as a RAR/RXR heterodimer. Interacts with RARA. Post-translationally, acetylated by EP300. In terms of tissue distribution, expressed in the liver, but not detected in the adrenal gland (at protein level). Restricted expression in adrenal gland, kidney, liver, brain and lungs. Strong expression in heart and muscles.

The protein resides in the nucleus. Its subcellular location is the cytoplasm. Receptor for retinoic acid. Retinoic acid receptors bind as heterodimers to their target response elements in response to their ligands, all-trans or 9-cis retinoic acid, and regulate gene expression in various biological processes. The RAR/RXR heterodimers bind to the retinoic acid response elements (RARE) composed of tandem 5'-AGGTCA-3' sites known as DR1-DR5. The high affinity ligand for RXRs is 9-cis retinoic acid. The sequence is that of Retinoic acid receptor RXR-gamma (Rxrg) from Rattus norvegicus (Rat).